Consider the following 109-residue polypeptide: Nascent polypeptide-associated complex protein (109 aa).

One can recognise an NAC-A/B domain in the interval 3 to 69; that stretch reads PMNPKQLKKL…TEEERVVLKI (67 aa).

The protein belongs to the NAC-alpha family. As to quaternary structure, homodimer. Interacts with the ribosome. Binds ribosomal RNA.

Its function is as follows. Contacts the emerging nascent chain on the ribosome. This Pyrococcus abyssi (strain GE5 / Orsay) protein is Nascent polypeptide-associated complex protein.